Consider the following 291-residue polypeptide: ATP phosphoribosyltransferase 1 (291 aa).

This sequence belongs to the ATP phosphoribosyltransferase family. Long subfamily. Mg(2+) serves as cofactor.

Its subcellular location is the cytoplasm. The catalysed reaction is 1-(5-phospho-beta-D-ribosyl)-ATP + diphosphate = 5-phospho-alpha-D-ribose 1-diphosphate + ATP. Its pathway is amino-acid biosynthesis; L-histidine biosynthesis; L-histidine from 5-phospho-alpha-D-ribose 1-diphosphate: step 1/9. Feedback inhibited by histidine. Catalyzes the condensation of ATP and 5-phosphoribose 1-diphosphate to form N'-(5'-phosphoribosyl)-ATP (PR-ATP). Has a crucial role in the pathway because the rate of histidine biosynthesis seems to be controlled primarily by regulation of HisG enzymatic activity. In Geobacter sulfurreducens (strain ATCC 51573 / DSM 12127 / PCA), this protein is ATP phosphoribosyltransferase 1.